Reading from the N-terminus, the 215-residue chain is GTP-binding nuclear protein ran-1 (215 aa).

The region spanning 6–170 (GIPTFKLVLV…LWLARKLLGD (165 aa)) is the Small GTPase Ran-type domain. 17-24 (DGGTGKTT) contributes to the GTP binding site. Residues 36–44 (KKYVATLGV) are switch-I. Residues glycine 67, 121–124 (NKVD), and 149–151 (SAK) each bind GTP. The interval 67–83 (GQEKFGGLRDGYYIQGQ) is switch-II.

This sequence belongs to the small GTPase superfamily. Ran family. Found in a nuclear export complex with RanGTP, exportin and pre-miRNA.

Its subcellular location is the nucleus. It is found in the chromosome. The protein resides in the centromere. The protein localises to the kinetochore. Ran GTPase system comprises ran-1, ran-2 and ran-3 and is essential in nucleocytoplasmic transport. Ran-1 is a GTP-binding protein that mediates the interaction between mitotic chromosomes and kinetochore microtubules. Plays a crucial role in nuclear envelope assembly at the end of each cell division. Required for the import of protein into the nucleus and also for RNA export. RCC1 (ran-3)/Ran (ran-1) complex (together with other proteins) acts as a component of a signal transmission pathway that detects unreplicated DNA. The chain is GTP-binding nuclear protein ran-1 (ran-1) from Caenorhabditis elegans.